Here is a 544-residue protein sequence, read N- to C-terminus: Membrane protein insertase YidC (544 aa).

Helical transmembrane passes span 6–26 (NILL…WQTD), 345–365 (LLMF…LITL), 423–443 (GGCL…WVLL), 460–480 (LSVQ…MFVM), and 503–523 (VVFT…WLVG).

Belongs to the OXA1/ALB3/YidC family. Type 1 subfamily. As to quaternary structure, interacts with the Sec translocase complex via SecD. Specifically interacts with transmembrane segments of nascent integral membrane proteins during membrane integration.

Its subcellular location is the cell inner membrane. Its function is as follows. Required for the insertion and/or proper folding and/or complex formation of integral membrane proteins into the membrane. Involved in integration of membrane proteins that insert both dependently and independently of the Sec translocase complex, as well as at least some lipoproteins. Aids folding of multispanning membrane proteins. This Shewanella woodyi (strain ATCC 51908 / MS32) protein is Membrane protein insertase YidC.